Reading from the N-terminus, the 843-residue chain is Protein P (843 aa).

The terminal protein domain (TP) stretch occupies residues 1–177 (MPLSYPHFRK…FCGSPYSWEQ (177 aa)). The segment at 178–346 (ELQHGSTSIN…YCLSHIINLL (169 aa)) is spacer. Disordered regions lie at residues 202 to 221 (SGIL…FQQS) and 285 to 310 (TNPS…VPPG). Residues 347–690 (EDWGPCYEHG…YMNLYPVARQ (344 aa)) are polymerase/reverse transcriptase domain (RT). The Reverse transcriptase domain maps to 357 to 600 (QHHIRTPRTP…YTLNFMGYVI (244 aa)). Mg(2+) contacts are provided by aspartate 429, aspartate 551, and aspartate 552.

Belongs to the hepadnaviridae P protein family.

It catalyses the reaction DNA(n) + a 2'-deoxyribonucleoside 5'-triphosphate = DNA(n+1) + diphosphate. It carries out the reaction Endonucleolytic cleavage to 5'-phosphomonoester.. Its activity is regulated as follows. Activated by host HSP70 and HSP40 in vitro to be able to bind the epsilon loop of the pgRNA. Because deletion of the RNase H region renders the protein partly chaperone-independent, the chaperones may be needed indirectly to relieve occlusion of the RNA-binding site by this domain. Inhibited by several reverse-transcriptase inhibitors: Lamivudine, Adefovir and Entecavir. In terms of biological role, multifunctional enzyme that converts the viral RNA genome into dsDNA in viral cytoplasmic capsids. This enzyme displays a DNA polymerase activity that can copy either DNA or RNA templates, and a ribonuclease H (RNase H) activity that cleaves the RNA strand of RNA-DNA heteroduplexes in a partially processive 3'- to 5'-endonucleasic mode. Neo-synthesized pregenomic RNA (pgRNA) are encapsidated together with the P protein, and reverse-transcribed inside the nucleocapsid. Initiation of reverse-transcription occurs first by binding the epsilon loop on the pgRNA genome, and is initiated by protein priming, thereby the 5'-end of (-)DNA is covalently linked to P protein. Partial (+)DNA is synthesized from the (-)DNA template and generates the relaxed circular DNA (RC-DNA) genome. After budding and infection, the RC-DNA migrates in the nucleus, and is converted into a plasmid-like covalently closed circular DNA (cccDNA). The activity of P protein does not seem to be necessary for cccDNA generation, and is presumably released from (+)DNA by host nuclear DNA repair machinery. This is Protein P from Hepatitis B virus genotype F1 (isolate Argentina/sa11/2000) (HBV-F).